The primary structure comprises 301 residues: Probable aspartoacylase (301 aa).

Residues His13 and Glu16 each coordinate Zn(2+). Residues Arg54 and 61-62 (NR) each bind substrate. His105 contacts Zn(2+). Glu163 and Tyr273 together coordinate substrate.

This sequence belongs to the AspA/AstE family. Aspartoacylase subfamily. Requires Zn(2+) as cofactor.

It carries out the reaction an N-acyl-L-aspartate + H2O = a carboxylate + L-aspartate. The chain is Probable aspartoacylase from Prochlorococcus marinus (strain MIT 9301).